The primary structure comprises 22 residues: MSKRAMKKIIPLITLFVVTLVG.

The propeptide occupies 1 to 14; sequence MSKRAMKKIIPLIT.

It localises to the secreted. Acts as a competitive inhibitor of the CAD1 pheromone. This is Sex pheromone inhibitor determinant (iad) from Enterococcus faecalis (strain ATCC 700802 / V583).